The following is a 273-amino-acid chain: Undecaprenyl-diphosphatase (273 aa).

The next 7 membrane-spanning stretches (helical) occupy residues 4–24 (FLLL…FLPI), 43–63 (KGKV…CWEY), 83–103 (FVLN…LFIK), 109–129 (LFHP…ILWA), 184–204 (ATEF…FYDL), 218–238 (VFAI…RGLL), and 248–268 (VFAW…YSGM).

Belongs to the UppP family.

Its subcellular location is the cell inner membrane. It carries out the reaction di-trans,octa-cis-undecaprenyl diphosphate + H2O = di-trans,octa-cis-undecaprenyl phosphate + phosphate + H(+). Functionally, catalyzes the dephosphorylation of undecaprenyl diphosphate (UPP). Confers resistance to bacitracin. This Nitrosospira multiformis (strain ATCC 25196 / NCIMB 11849 / C 71) protein is Undecaprenyl-diphosphatase.